A 223-amino-acid chain; its full sequence is Protein UGX2 (223 aa).

The segment covering 78-95 (SNKRAKMKSKTKLTRTAK) has biased composition (basic residues). The disordered stretch occupies residues 78–117 (SNKRAKMKSKTKLTRTAKQRRESPVCERDESDEDNDSDHY). A compositionally biased stretch (basic and acidic residues) spans 96–105 (QRRESPVCER).

This Saccharomyces cerevisiae (strain ATCC 204508 / S288c) (Baker's yeast) protein is Protein UGX2 (UGX2).